The primary structure comprises 215 residues: 3-isopropylmalate dehydratase small subunit (215 aa).

It belongs to the LeuD family. LeuD type 1 subfamily. Heterodimer of LeuC and LeuD.

It carries out the reaction (2R,3S)-3-isopropylmalate = (2S)-2-isopropylmalate. It functions in the pathway amino-acid biosynthesis; L-leucine biosynthesis; L-leucine from 3-methyl-2-oxobutanoate: step 2/4. Its function is as follows. Catalyzes the isomerization between 2-isopropylmalate and 3-isopropylmalate, via the formation of 2-isopropylmaleate. In Polynucleobacter asymbioticus (strain DSM 18221 / CIP 109841 / QLW-P1DMWA-1) (Polynucleobacter necessarius subsp. asymbioticus), this protein is 3-isopropylmalate dehydratase small subunit.